The sequence spans 287 residues: Energy-coupling factor transporter ATP-binding protein EcfA1 (287 aa).

The 243-residue stretch at 6-248 (IVAEGVSYAY…ADRIRALRLD (243 aa)) folds into the ABC transporter domain. Residue 47–54 (GMNGSGKS) coordinates ATP.

It belongs to the ABC transporter superfamily. Energy-coupling factor EcfA family. In terms of assembly, forms a stable energy-coupling factor (ECF) transporter complex composed of 2 membrane-embedded substrate-binding proteins (S component), 2 ATP-binding proteins (A component) and 2 transmembrane proteins (T component).

Its subcellular location is the cell membrane. ATP-binding (A) component of a common energy-coupling factor (ECF) ABC-transporter complex. Unlike classic ABC transporters this ECF transporter provides the energy necessary to transport a number of different substrates. The chain is Energy-coupling factor transporter ATP-binding protein EcfA1 from Symbiobacterium thermophilum (strain DSM 24528 / JCM 14929 / IAM 14863 / T).